Reading from the N-terminus, the 141-residue chain is Hemoglobin subunit alpha-D (141 aa).

A Globin domain is found at 1–141 (VLTAEDRRLL…VADVLCEKYR (141 aa)). Heme b contacts are provided by Gln58 and His87.

Belongs to the globin family. As to quaternary structure, heterotetramer of two alpha chains and two beta chains. As to expression, red blood cells.

Involved in oxygen transport from the lung to the various peripheral tissues. This is Hemoglobin subunit alpha-D from Drymarchon melanurus erebennus (Texas indigo snake).